A 220-amino-acid chain; its full sequence is VQ motif-containing protein 5 (220 aa).

The short motif at 49–57 is the VQ element; the sequence is FKSLVQQLT. 2 disordered regions span residues 61-80 and 131-171; these read PCDR…PEPI and HMMA…GASS. Polar residues-rich tracts occupy residues 133–150 and 157–171; these read MAQS…QSNG and SWFN…GASS.

It is found in the nucleus. In terms of biological role, may function as negative regulator of plant defense. The sequence is that of VQ motif-containing protein 5 from Arabidopsis thaliana (Mouse-ear cress).